The chain runs to 105 residues: Thioredoxin (105 aa).

Residues 1-105 enclose the Thioredoxin domain; sequence MVNNVTDSSF…SLLDWINKSI (105 aa). A disulfide bridge links Cys30 with Cys33.

It belongs to the thioredoxin family.

Functionally, component of the thioredoxin-thioredoxin reductase system. Participates in various redox reactions through the reversible oxidation of its active center dithiol to a disulfide and catalyzes dithiol-disulfide exchange reactions. This is Thioredoxin (trxA) from Rickettsia prowazekii (strain Madrid E).